We begin with the raw amino-acid sequence, 728 residues long: 1,4-alpha-glucan branching enzyme GlgB (728 aa).

The active-site Nucleophile is Asp-405. Glu-458 acts as the Proton donor in catalysis.

The protein belongs to the glycosyl hydrolase 13 family. GlgB subfamily. In terms of assembly, monomer.

It carries out the reaction Transfers a segment of a (1-&gt;4)-alpha-D-glucan chain to a primary hydroxy group in a similar glucan chain.. Its pathway is glycan biosynthesis; glycogen biosynthesis. Its function is as follows. Catalyzes the formation of the alpha-1,6-glucosidic linkages in glycogen by scission of a 1,4-alpha-linked oligosaccharide from growing alpha-1,4-glucan chains and the subsequent attachment of the oligosaccharide to the alpha-1,6 position. This Klebsiella pneumoniae subsp. pneumoniae (strain ATCC 700721 / MGH 78578) protein is 1,4-alpha-glucan branching enzyme GlgB.